A 204-amino-acid polypeptide reads, in one-letter code: Carbon disulfide hydrolase (204 aa).

Zn(2+)-binding residues include Cys-35, His-88, and Cys-91.

Belongs to the beta-class carbonic anhydrase family. As to quaternary structure, forms a hexadecameric catenane homooligomer, through interactions of two interlocked octameric rings. Requires Zn(2+) as cofactor.

The enzyme catalyses carbon disulfide + 2 H2O = 2 hydrogen sulfide + CO2 + 2 H(+). The protein operates within sulfur metabolism; hydrogen sulfide biosynthesis. Its function is as follows. Catalyzes the conversion of carbon disulfide into hydrogen sulfide and carbon dioxide, with carbonyl sulfide as an intermediate. Likely plays a key role in sulfur metabolism in S.solfataricus. Does not show carbonic anhydrase activity (hydration of CO(2) to carbonate). This chain is Carbon disulfide hydrolase, found in Saccharolobus solfataricus (strain ATCC 35092 / DSM 1617 / JCM 11322 / P2) (Sulfolobus solfataricus).